A 556-amino-acid polypeptide reads, in one-letter code: Glycosyl hydrolase 5 family protein (556 aa).

The signal sequence occupies residues 1–28 (MTSAGVAPTALRLLTALLLLLVAAPSHS). N-linked (GlcNAc...) asparagine glycosylation is found at Asn-102 and Asn-113. Residue Glu-208 is the Proton donor/acceptor of the active site. N-linked (GlcNAc...) asparagine glycosylation is found at Asn-212, Asn-290, and Asn-307. Glu-473 acts as the Nucleophile in catalysis. Asn-474 and Asn-479 each carry an N-linked (GlcNAc...) asparagine glycan.

The protein belongs to the glycosyl hydrolase 5 (cellulase A) family. Glycosylated.

May have glycosyl hydrolase activity. This chain is Glycosyl hydrolase 5 family protein, found in Chamaecyparis obtusa (Hinoki false-cypress).